Consider the following 236-residue polypeptide: Uridylate kinase (236 aa).

11–14 is a binding site for ATP; that stretch reads KFSG. Residue G53 coordinates UMP. The ATP site is built by G54 and R58. Residues D73 and 134–141 each bind UMP; that span reads TGSPFFTT. T161, Y167, and D170 together coordinate ATP.

This sequence belongs to the UMP kinase family. Homohexamer.

It is found in the cytoplasm. The catalysed reaction is UMP + ATP = UDP + ADP. The protein operates within pyrimidine metabolism; CTP biosynthesis via de novo pathway; UDP from UMP (UMPK route): step 1/1. Its activity is regulated as follows. Inhibited by UTP. Catalyzes the reversible phosphorylation of UMP to UDP. The sequence is that of Uridylate kinase from Hydrogenovibrio crunogenus (strain DSM 25203 / XCL-2) (Thiomicrospira crunogena).